We begin with the raw amino-acid sequence, 164 residues long: Protein PPLZ02 (164 aa).

Residues 7-64 (RYRGFRQRHWGSWVSEIRHSILKTRIWQGTFESAEDAARAYDEAARLMCGTRARTNFP) constitute a DNA-binding region (AP2/ERF).

The protein localises to the nucleus. Functionally, essential for all lupin cells independent of the respective tissue. This Lupinus polyphyllus (Large-leaved lupine) protein is Protein PPLZ02 (PPLZ02).